A 479-amino-acid polypeptide reads, in one-letter code: Zinc finger and SCAN domain-containing protein 26 (479 aa).

K17 is covalently cross-linked (Glycyl lysine isopeptide (Lys-Gly) (interchain with G-Cter in SUMO2)). One can recognise an SCAN box domain in the interval 51–133 (CKRFRQLRYE…VFLEDLQLEL (83 aa)). A disordered region spans residues 155–187 (TAPGKATPERQVQPEGDVPQPEREKGEAKRIEN). The segment covering 174-187 (QPEREKGEAKRIEN) has biased composition (basic and acidic residues). The segment at 232–254 (CKCSEYGQAFFQHSDLIKHESSH) adopts a C2H2-type 1; degenerate zinc-finger fold. C2H2-type zinc fingers lie at residues 283 to 305 (HQCH…QKIH), 311 to 333 (YQCK…LRIH), 339 to 361 (YLCI…QRIH), 367 to 389 (CQCK…QRIH), 395 to 417 (HQCN…HRIH), 423 to 445 (FKCT…VRIH), and 451 to 473 (YKCN…QRYH).

Its subcellular location is the nucleus. Its function is as follows. May be involved in transcriptional regulation. The polypeptide is Zinc finger and SCAN domain-containing protein 26 (ZSCAN26) (Bos taurus (Bovine)).